Here is a 1003-residue protein sequence, read N- to C-terminus: Cytosolic carboxypeptidase 3 (1003 aa).

Positions 1–23 are disordered; the sequence is MSEDSEKEDYSDRTISDEDESDE. Residues 299 to 570 form the Peptidase M14 domain; that stretch reads YPYTYTNLQE…HFCDSLLDYC (272 aa). Zn(2+)-binding residues include His-364, Glu-367, and His-460. The Proton donor/acceptor role is filled by Glu-534. 2 disordered regions span residues 642–662 and 911–1003; these read KQLKTKKERNSTIERHQNIRE and KSSE…QRDT. Residues 649-662 are compositionally biased toward basic and acidic residues; that stretch reads ERNSTIERHQNIRE. The segment covering 922 to 934 has biased composition (basic residues); that stretch reads PKKRRKYSRVKAT. The segment covering 963–976 has biased composition (polar residues); that stretch reads AEGSSQQGTMQTAP.

Belongs to the peptidase M14 family. Zn(2+) serves as cofactor.

Its subcellular location is the cytoplasm. The protein resides in the cytosol. The enzyme catalyses (L-glutamyl)(n+1)-gamma-L-glutamyl-L-glutamyl-[protein] + H2O = (L-glutamyl)(n)-gamma-L-glutamyl-L-glutamyl-[protein] + L-glutamate. Metallocarboxypeptidase that mediates deglutamylation of tubulin and non-tubulin target proteins. Catalyzes the removal of polyglutamate side chains present on the gamma-carboxyl group of glutamate residues within the C-terminal tail of tubulin protein. Specifically cleaves tubulin long-side-chains, while it is not able to remove the branching point glutamate. Also catalyzes the removal of polyglutamate residues from the carboxy-terminus of non-tubulin proteins such as MYLK. May catalyze the hydrolysis of aspartate from the carboxy-terminus of target proteins. Does not show detyrosinase or deglycylase activities from the carboxy-terminus of target proteins. The chain is Cytosolic carboxypeptidase 3 (AGBL3) from Bos taurus (Bovine).